We begin with the raw amino-acid sequence, 547 residues long: Trigger factor-like protein TIG, Chloroplastic (547 aa).

The transit peptide at 1–77 directs the protein to the chloroplast; sequence MELCVISTTT…SHGGNFRLFA (77 aa). N-acetylalanine is present on alanine 78. Residues 271–366 enclose the PPIase FKBP-type domain; sequence GDLAVVDISA…LFYRDLPTLD (96 aa).

This sequence belongs to the FKBP-type PPIase family. Tig subfamily.

It localises to the plastid. The protein resides in the chloroplast. The enzyme catalyses [protein]-peptidylproline (omega=180) = [protein]-peptidylproline (omega=0). In terms of biological role, involved in protein export. Acts as a chaperone by maintaining the newly synthesized protein in an open conformation. Functions as a peptidyl-prolyl cis-trans isomerase. The protein is Trigger factor-like protein TIG, Chloroplastic (TIG) of Arabidopsis thaliana (Mouse-ear cress).